We begin with the raw amino-acid sequence, 529 residues long: Bifunctional purine biosynthesis protein PurH (529 aa).

Positions methionine 1–valine 148 constitute an MGS-like domain. The residue at position 287 (lysine 287) is an N6-acetyllysine.

It belongs to the PurH family.

It catalyses the reaction (6R)-10-formyltetrahydrofolate + 5-amino-1-(5-phospho-beta-D-ribosyl)imidazole-4-carboxamide = 5-formamido-1-(5-phospho-D-ribosyl)imidazole-4-carboxamide + (6S)-5,6,7,8-tetrahydrofolate. It carries out the reaction IMP + H2O = 5-formamido-1-(5-phospho-D-ribosyl)imidazole-4-carboxamide. It participates in purine metabolism; IMP biosynthesis via de novo pathway; 5-formamido-1-(5-phospho-D-ribosyl)imidazole-4-carboxamide from 5-amino-1-(5-phospho-D-ribosyl)imidazole-4-carboxamide (10-formyl THF route): step 1/1. Its pathway is purine metabolism; IMP biosynthesis via de novo pathway; IMP from 5-formamido-1-(5-phospho-D-ribosyl)imidazole-4-carboxamide: step 1/1. This is Bifunctional purine biosynthesis protein PurH from Shigella dysenteriae serotype 1 (strain Sd197).